Consider the following 1445-residue polypeptide: CD109 antigen (1445 aa).

Residues 1–21 (MQGPPLLTAAHLLCVCTAALA) form the signal peptide. N-linked (GlcNAc...) asparagine glycans are attached at residues asparagine 68, asparagine 118, asparagine 247, asparagine 279, asparagine 365, asparagine 419, asparagine 513, and asparagine 645. The tract at residues 593–702 (DKSVNLMNAS…TWIWLDTNMG (110 aa)) is bait region (approximate). The isoglutamyl cysteine thioester (Cys-Gln) cross-link spans 921 to 924 (CGEQ). N-linked (GlcNAc...) asparagine glycans are attached at residues asparagine 1086 and asparagine 1355. Alanine 1420 is lipidated: GPI-anchor amidated alanine. Positions 1421–1445 (SGSHHHSSVIFIFCFKLLYFMELWL) are cleaved as a propeptide — removed in mature form.

Belongs to the protease inhibitor I39 (alpha-2-macroglobulin) family. As to quaternary structure, heterodimer; disulfide-linked. Interacts with TGFB1 and TGFBR1. Forms a heteromeric complex with TGFBR1, TGFBR2 and TGFBR3 in a ligand-independent manner. N-glycosylated. Post-translationally, 2 forms of 150 (p150) and 120 kDa (p120) exist due to proteolytic degradation from a 180 kDa form. In terms of tissue distribution, widely expressed with high level in uterus, aorta, heart, lung, trachea, placenta and in fetal heart, kidney, liver, spleen and lung. Expressed by CD34(+) acute myeloid leukemia cell lines, T-cell lines, activated T-lymphoblasts, endothelial cells and activated platelets. Isoform 4 is expressed in placenta. Isoform 1 is expressed in keratinocytes and placenta.

It localises to the cell membrane. In terms of biological role, modulates negatively TGFB1 signaling in keratinocytes. The protein is CD109 antigen (CD109) of Homo sapiens (Human).